Consider the following 343-residue polypeptide: L-threonine 3-dehydrogenase (343 aa).

C38 lines the Zn(2+) pocket. Active-site charge relay system residues include T40 and H43. Residues H63, E64, C93, C96, C99, and C107 each contribute to the Zn(2+) site. Residues I175, D195, R200, 262 to 264, and 286 to 287 contribute to the NAD(+) site; these read LGI and IY.

Belongs to the zinc-containing alcohol dehydrogenase family. In terms of assembly, homotetramer. Zn(2+) is required as a cofactor.

It localises to the cytoplasm. The catalysed reaction is L-threonine + NAD(+) = (2S)-2-amino-3-oxobutanoate + NADH + H(+). Its pathway is amino-acid degradation; L-threonine degradation via oxydo-reductase pathway; glycine from L-threonine: step 1/2. In terms of biological role, catalyzes the NAD(+)-dependent oxidation of L-threonine to 2-amino-3-ketobutyrate. This Pectobacterium carotovorum subsp. carotovorum (strain PC1) protein is L-threonine 3-dehydrogenase.